Consider the following 37-residue polypeptide: Large ribosomal subunit protein bL36c (37 aa).

This sequence belongs to the bacterial ribosomal protein bL36 family.

It is found in the plastid. The protein localises to the chloroplast. The chain is Large ribosomal subunit protein bL36c from Bigelowiella natans (Pedinomonas minutissima).